We begin with the raw amino-acid sequence, 360 residues long: UDP-N-acetylglucosamine--N-acetylmuramyl-(pentapeptide) pyrophosphoryl-undecaprenol N-acetylglucosamine transferase (360 aa).

The UDP-N-acetyl-alpha-D-glucosamine site is built by Ser198 and Gln289.

The protein belongs to the glycosyltransferase 28 family. MurG subfamily.

It localises to the cell membrane. The catalysed reaction is Mur2Ac(oyl-L-Ala-gamma-D-Glu-L-Lys-D-Ala-D-Ala)-di-trans,octa-cis-undecaprenyl diphosphate + UDP-N-acetyl-alpha-D-glucosamine = beta-D-GlcNAc-(1-&gt;4)-Mur2Ac(oyl-L-Ala-gamma-D-Glu-L-Lys-D-Ala-D-Ala)-di-trans,octa-cis-undecaprenyl diphosphate + UDP + H(+). It functions in the pathway cell wall biogenesis; peptidoglycan biosynthesis. In terms of biological role, cell wall formation. Catalyzes the transfer of a GlcNAc subunit on undecaprenyl-pyrophosphoryl-MurNAc-pentapeptide (lipid intermediate I) to form undecaprenyl-pyrophosphoryl-MurNAc-(pentapeptide)GlcNAc (lipid intermediate II). The protein is UDP-N-acetylglucosamine--N-acetylmuramyl-(pentapeptide) pyrophosphoryl-undecaprenol N-acetylglucosamine transferase of Streptococcus pyogenes serotype M18 (strain MGAS8232).